Consider the following 132-residue polypeptide: Small ribosomal subunit protein uS9 (132 aa).

It belongs to the universal ribosomal protein uS9 family.

The protein is Small ribosomal subunit protein uS9 of Leptospira interrogans serogroup Icterohaemorrhagiae serovar copenhageni (strain Fiocruz L1-130).